We begin with the raw amino-acid sequence, 68 residues long: MARITTEDCTGKISNHFDLTLVAARRARQLENGNTPLVDDVRNNKPTVTALREIAAGHIGTELLTRNK.

This sequence belongs to the RNA polymerase subunit omega family. In terms of assembly, the RNAP catalytic core consists of 2 alpha, 1 beta, 1 beta' and 1 omega subunit. When a sigma factor is associated with the core the holoenzyme is formed, which can initiate transcription.

It carries out the reaction RNA(n) + a ribonucleoside 5'-triphosphate = RNA(n+1) + diphosphate. Its function is as follows. Promotes RNA polymerase assembly. Latches the N- and C-terminal regions of the beta' subunit thereby facilitating its interaction with the beta and alpha subunits. The protein is DNA-directed RNA polymerase subunit omega of Neisseria gonorrhoeae (strain NCCP11945).